The sequence spans 529 residues: uncharacterized protein (529 aa).

The segment covering 1–11 (MSSSKIKELRE) has biased composition (basic and acidic residues). Disordered stretches follow at residues 1–222 (MSSS…IPYS), 237–256 (PFLESKVLPQNNETSDEENV), 271–372 (AFLQ…TAAP), and 393–488 (GSGN…PSFT). Over residues 27–40 (MQQNQPRPATTTPP) the composition is skewed to polar residues. The segment covering 83-95 (TKGRAHPRSRRPP) has biased composition (basic residues). Residues 110–125 (NTGSTKAADTKSSVEA) show a composition bias toward polar residues. Serine 128 carries the phosphoserine modification. The span at 170-199 (TTKAVEATTSKASSAHTDTLATSASNSDRG) shows a compositional bias: polar residues. Serine 217 is modified (phosphoserine). Residues 237-249 (PFLESKVLPQNNE) show a composition bias toward polar residues. Positions 321-334 (SSPLSFSASKSPAA) are enriched in low complexity. Polar residues predominate over residues 336 to 362 (DSSTKTPTEQVNVVSKQAPTTSSTSVI). A compositionally biased stretch (basic and acidic residues) spans 409–426 (ERTKSLSKESPVEPEKPA). Over residues 430–455 (ATSSSTPTTENKESWTNQGIKSSQQR) the composition is skewed to polar residues. Positions 456-470 (SANASPATSPSNQAS) are enriched in low complexity. A compositionally biased stretch (polar residues) spans 471-488 (IHASFTKESSTHSSPSFT).

Its subcellular location is the cytoplasm. This is an uncharacterized protein from Schizosaccharomyces pombe (strain 972 / ATCC 24843) (Fission yeast).